The following is a 677-amino-acid chain: Epithelial splicing regulatory protein 1 (677 aa).

RRM domains lie at 225–302 (TVVR…KATG), 326–406 (VIVR…RSTA), and 445–525 (DCVR…QCSA). Ser543 carries the post-translational modification Phosphoserine. Arg578 bears the Omega-N-methylarginine mark.

This sequence belongs to the ESRP family.

It localises to the nucleus. Functionally, mRNA splicing factor that regulates the formation of epithelial cell-specific isoforms. Specifically regulates the expression of FGFR2-IIIb, an epithelial cell-specific isoform of FGFR2. Also regulates the splicing of CD44, CTNND1, ENAH, 3 transcripts that undergo changes in splicing during the epithelial-to-mesenchymal transition (EMT). Acts by directly binding specific sequences in mRNAs. Binds the GU-rich sequence motifs in the ISE/ISS-3, a cis-element regulatory region present in the mRNA of FGFR2. Regulates splicing and expression of genes involved in inner ear development, auditory hair cell differentiation, and cell fate specification in the cochlear epithelium. This Rattus norvegicus (Rat) protein is Epithelial splicing regulatory protein 1 (Esrp1).